Here is a 504-residue protein sequence, read N- to C-terminus: Potassium voltage-gated channel subfamily V member 1 (504 aa).

2 disordered regions span residues 1-22 (MDLSPRNRPLLESSSLDSGGSL) and 172-193 (KKDTDDQESQHESEQDFSQGPC). The Cytoplasmic portion of the chain corresponds to 1–214 (MDLSPRNRPL…EKPGSSTAAR (214 aa)). The segment covering 10–22 (LLESSSLDSGGSL) has biased composition (low complexity). A compositionally biased stretch (basic and acidic residues) spans 172–185 (KKDTDDQESQHESE). Residues 215–235 (IFGVISIIFVAVSIVNMALMS) traverse the membrane as a helical segment. Residues 236–242 (AELSWLN) are Extracellular-facing. Residues 243-263 (LQLLEILEYVCISWFTGEFIL) traverse the membrane as a helical segment. Residues 264 to 280 (RFLCVKDRCRFLRKVPN) lie on the Cytoplasmic side of the membrane. Residues 281 to 301 (IIDLLAILPFYITLLVESLSG) traverse the membrane as a helical segment. The Extracellular portion of the chain corresponds to 302–313 (SHTTQELENVGR). The helical; Voltage-sensor transmembrane segment at 314-335 (LVQVLRLLRALRMLKLGRHSTG) threads the bilayer. At 336–349 (LRSLGMTITQCYEE) the chain is on the cytoplasmic side. A helical transmembrane segment spans residues 350 to 370 (VGLLLLFLSVGISIFSTIEYF). Positions 396–401 (TVGYGD) match the Selectivity filter motif. A helical transmembrane segment spans residues 411 to 431 (IVAFMCILSGILVLALPIAII). At 432–504 (NDRFSACYFT…RSSGGDDFWF (73 aa)) the chain is on the cytoplasmic side.

This sequence belongs to the potassium channel family. V (TC 1.A.1.2) subfamily. Kv8.1/KCNV1 sub-subfamily. In terms of assembly, heteromultimer with KCNB1 and KCNB2. Interacts with KCNC4 and KCND1. As to expression, detected in brain, throughout layers II, IV and VI of the brain cortex. Detected in cerebellum and hippocampus, in the granule cell layer, Purkinje cell layer, pyramidal cell layer and dentate gyrus. Detected at lower levels in olfactory bulb, amygdala, thalamus, hypothalamus, midbrain and brainstem.

It is found in the cell membrane. Functionally, potassium channel subunit that does not form functional channels by itself. Modulates KCNB1 and KCNB2 channel activity by shifting the threshold for inactivation to more negative values and by slowing the rate of inactivation. Can down-regulate the channel activity of KCNB1, KCNB2, KCNC4 and KCND1, possibly by trapping them in intracellular membranes. The protein is Potassium voltage-gated channel subfamily V member 1 (KCNV1) of Mesocricetus auratus (Golden hamster).